A 308-amino-acid polypeptide reads, in one-letter code: Porphobilinogen deaminase (308 aa).

Position 240 is an S-(dipyrrolylmethanemethyl)cysteine (cysteine 240).

This sequence belongs to the HMBS family. In terms of assembly, monomer. Dipyrromethane is required as a cofactor.

The catalysed reaction is 4 porphobilinogen + H2O = hydroxymethylbilane + 4 NH4(+). It functions in the pathway porphyrin-containing compound metabolism; protoporphyrin-IX biosynthesis; coproporphyrinogen-III from 5-aminolevulinate: step 2/4. Its function is as follows. Tetrapolymerization of the monopyrrole PBG into the hydroxymethylbilane pre-uroporphyrinogen in several discrete steps. The polypeptide is Porphobilinogen deaminase (Campylobacter lari (strain RM2100 / D67 / ATCC BAA-1060)).